We begin with the raw amino-acid sequence, 170 residues long: Cytochrome bc1 complex Rieske iron-sulfur subunit (170 aa).

The region spanning 63–153 is the Rieske domain; that stretch reads KAALMIIRLE…IGVNDEGYLE (91 aa). [2Fe-2S] cluster is bound by residues Cys-96, His-98, Cys-115, and His-118. Cys-101 and Cys-117 are disulfide-bonded.

The cytochrome bc1 complex is composed of a cytochrome b (QcrB), the Rieske iron-sulfur protein (QcrA) and a diheme cytochrome c (QcrC) subunit. Requires [2Fe-2S] cluster as cofactor.

It localises to the cell membrane. Its function is as follows. Iron-sulfur subunit of the cytochrome bc1 complex, an essential component of the respiratory electron transport chain required for ATP synthesis. The bc1 complex catalyzes the oxidation of menaquinol and the reduction of cytochrome c in the respiratory chain. The bc1 complex operates through a Q-cycle mechanism that couples electron transfer to generation of the proton gradient that drives ATP synthesis. The polypeptide is Cytochrome bc1 complex Rieske iron-sulfur subunit (qcrA) (Streptomyces lividans).